Consider the following 628-residue polypeptide: MFCIIRAQLLLLLHLLVLALLLVGTVCNAHPQHGHPSELEPLALKRGGSPRDDGNTLAPRCRCIPGEACWPSTQIWDSFNRTIGGSLIKTAPLAESCYPGPKKNTRKCAVVSRKWTDQDFQTDSPVGRTYPYNITCAPVNYFAGQRPTTCSLGQLPVYAIDARTRQSVAQGLRFAKDNNLRVTVVSTGHDLLGRADGYGSLEIWLRHHRNEIRFERQYMATDGCRESGWTGSAIDIDGAYQWRDVHIKARANNVIVVGGGSVSPGAIGGWPSGGGHGPASRNYGLGADQILEAEVMLADGSVVLANHCQHTDLFRALRGGGPGFGVVLKTKIKAYPNVASVSVHHLTITPIRQTPNNSDLLDAVAVLMQAYPKLSDDGYAGYAFWLRNCKSFFIGSAKSGYRHGIWMIGKTTEEAEHSFAPVREALDKFKSKLTISESYMTYNDYWSFYTSESGLYESVGTTSVLTSRLIDRPAVEDYNRVREAVEVIGGKPEDYATNVMMLVSNGQVFADAADKSSGLNPAWRVSPYVVISSRGIPMVVDQASRKEVADDITYVKGAALQKLAPNTGGYMNEGDRNDPNYIKNFFGTIYPTHLATKKKYDPWGLFYCPTCVGAELFEETSRGELCRR.

An N-terminal signal peptide occupies residues methionine 1–alanine 29. A disordered region spans residues glycine 34–aspartate 53. Residues asparagine 80 and asparagine 133 are each glycosylated (N-linked (GlcNAc...) asparagine). Positions leucine 152–asparagine 337 constitute an FAD-binding PCMH-type domain. N-linked (GlcNAc...) asparagine glycosylation occurs at asparagine 356.

This sequence belongs to the oxygen-dependent FAD-linked oxidoreductase family.

It participates in secondary metabolite biosynthesis. In terms of biological role, FAD-linked oxidoreductase; part of the gene cluster that mediates the biosynthesis of hypothemycin, a resorcylic acid lactone (RAL) that irreversibly inhibits a subset of protein kinases with a conserved cysteine in the ATP binding site such as human ERK2. The first step is performed by both PKSs hmp3 and hmp8 and leads to the production of 7',8'-dehydrozearalenol (DHZ). The highly reducing PKS hpm8 synthesizes the reduced hexaketide (7S,11S,2E,8E)-7,11-dihydroxy-dodeca-2,8-dienoate, which is transferred downstream to the non-reducing PKS hpm3. Hpm3 then extends the reduced hexaketide to a nonaketide, after which regioselective cyclization and macrolactonization affords DHZ. The next step is the conversion of DHZ into aigialomycin C and is performed by the O-methyltransferase hmp5, the FAD-binding monooxygenase hmp7, and the cytochrome P450 monooxygenase hmp1. The wide substrate tolerance of the hmp5 and hmp7 implies that the reactions from DHZ to aigialomycin C can occur in any order. The steps from aigialomycin C to hypothemycin are less well established. The FAD-linked oxidoreductase hmp9 presumably catalyzes oxidation of the C-6' hydroxyl to a ketone. The timing of this oxidation is important, since the resulting enone functional group is a Michael acceptor that can react spontaneously with glutathione, an abundant metabolite in fungal cells. The glutathione S-transferase hmp2 catalyzes cis-trans isomerization of the 7',8' double bond with equilibrium favoring the trans isomer. The hpm6-encoded transporter might preferentially pump hypothemycin out of the cell relative to the trans isomer aigialomycin A. The cis-to-trans isomerization may be coupled with C-4' hydroxylation, since all known hypothemycin analogs containing the enone functional group also have hydroxyl groups at both C-4' and C-5'. This chain is FAD-linked oxidoreductase hmp9, found in Hypomyces subiculosus (Nectria subiculosa).